The following is a 545-amino-acid chain: Threonine--tRNA ligase catalytic subunit (545 aa).

Positions 139-433 are catalytic; that stretch reads DHRLIGEKLD…LLEHFKGKLP (295 aa). Residues Cys231, His282, and His410 each contribute to the Zn(2+) site.

The protein belongs to the class-II aminoacyl-tRNA synthetase family. In terms of assembly, homodimer. Probably interacts with its editing subunit. The cofactor is Zn(2+).

Its subcellular location is the cytoplasm. It carries out the reaction tRNA(Thr) + L-threonine + ATP = L-threonyl-tRNA(Thr) + AMP + diphosphate + H(+). In terms of biological role, catalyzes the attachment of threonine to tRNA(Thr) in a two-step reaction: L-threonine is first activated by ATP to form Thr-AMP and then transferred to the acceptor end of tRNA(Thr). Also activates L-serine and transfers it to tRNA(Thr) but cannot deacylate incorrectly charged amino acid; unlike most archaea the editing function is found in a freestanding protein. This is Threonine--tRNA ligase catalytic subunit from Saccharolobus islandicus (strain Y.G.57.14 / Yellowstone #1) (Sulfolobus islandicus).